Here is a 93-residue protein sequence, read N- to C-terminus: Small ribosomal subunit protein uS19 (93 aa).

Belongs to the universal ribosomal protein uS19 family.

Functionally, protein S19 forms a complex with S13 that binds strongly to the 16S ribosomal RNA. The polypeptide is Small ribosomal subunit protein uS19 (Cutibacterium acnes (strain DSM 16379 / KPA171202) (Propionibacterium acnes)).